The primary structure comprises 408 residues: Multifunctional CCA protein (408 aa).

Residues G8 and R11 each contribute to the ATP site. 2 residues coordinate CTP: G8 and R11. The Mg(2+) site is built by D21 and D23. The ATP site is built by R91, R137, and R140. Residues R91, R137, and R140 each contribute to the CTP site. The HD domain maps to 228–329 (SGVHTLMVLE…VKLFDKADFW (102 aa)).

This sequence belongs to the tRNA nucleotidyltransferase/poly(A) polymerase family. Bacterial CCA-adding enzyme type 1 subfamily. As to quaternary structure, monomer. Can also form homodimers and oligomers. The cofactor is Mg(2+). Ni(2+) is required as a cofactor.

It catalyses the reaction a tRNA precursor + 2 CTP + ATP = a tRNA with a 3' CCA end + 3 diphosphate. The catalysed reaction is a tRNA with a 3' CCA end + 2 CTP + ATP = a tRNA with a 3' CCACCA end + 3 diphosphate. Its function is as follows. Catalyzes the addition and repair of the essential 3'-terminal CCA sequence in tRNAs without using a nucleic acid template. Adds these three nucleotides in the order of C, C, and A to the tRNA nucleotide-73, using CTP and ATP as substrates and producing inorganic pyrophosphate. tRNA 3'-terminal CCA addition is required both for tRNA processing and repair. Also involved in tRNA surveillance by mediating tandem CCA addition to generate a CCACCA at the 3' terminus of unstable tRNAs. While stable tRNAs receive only 3'-terminal CCA, unstable tRNAs are marked with CCACCA and rapidly degraded. This chain is Multifunctional CCA protein, found in Shewanella piezotolerans (strain WP3 / JCM 13877).